The primary structure comprises 382 residues: uncharacterized protein (382 aa).

12 helical membrane passes run 8–28 (VLLL…LNTL), 41–61 (WQVG…TLIA), 73–93 (SYHY…LSVD), 94–114 (FWSW…IWVI), 133–153 (AAYM…LGVV), 157–177 (LLSV…PLLF), 208–228 (GCII…LYLS), 235–255 (ASVG…QWPI), 274–294 (VVIL…ALFI), 295–315 (LGCA…EKVS), 325–345 (ALLM…SLLM), and 349–369 (SDNL…MMLL).

This sequence belongs to the major facilitator superfamily. YcaD (TC 2.A.1.26) family.

The protein localises to the cell inner membrane. This is an uncharacterized protein from Yersinia enterocolitica serotype O:8 / biotype 1B (strain NCTC 13174 / 8081).